A 245-amino-acid polypeptide reads, in one-letter code: Orotidine 5'-phosphate decarboxylase (245 aa).

Substrate contacts are provided by residues Asp22, Lys44, 71–80 (DLKFHDIPNT), Thr131, Arg192, Gln201, Gly221, and Arg222. Catalysis depends on Lys73, which acts as the Proton donor.

It belongs to the OMP decarboxylase family. Type 1 subfamily. Homodimer.

It catalyses the reaction orotidine 5'-phosphate + H(+) = UMP + CO2. It functions in the pathway pyrimidine metabolism; UMP biosynthesis via de novo pathway; UMP from orotate: step 2/2. Its function is as follows. Catalyzes the decarboxylation of orotidine 5'-monophosphate (OMP) to uridine 5'-monophosphate (UMP). The chain is Orotidine 5'-phosphate decarboxylase from Yersinia pseudotuberculosis serotype O:1b (strain IP 31758).